A 130-amino-acid polypeptide reads, in one-letter code: P antigen family member 5 (130 aa).

Disordered stretches follow at residues 1-88 and 101-130; these read MQAP…TDVE and DAPG…EGQL. Over residues 14 to 26 the composition is skewed to basic and acidic residues; it reads TREEVRDMSEHVT. Residues 27–42 are compositionally biased toward polar residues; that stretch reads RSQSSERGNDQESSQP. Residues Thr113 and Thr116 each carry the phosphothreonine modification.

Belongs to the GAGE family.

This chain is P antigen family member 5 (PAGE5), found in Homo sapiens (Human).